The primary structure comprises 227 residues: Fibrillarin-like rRNA/tRNA 2'-O-methyltransferase (227 aa).

Residues 82-83 (TT), 100-101 (EF), 125-126 (DA), and 145-148 (DVAQ) contribute to the S-adenosyl-L-methionine site.

It belongs to the methyltransferase superfamily. Fibrillarin family. As to quaternary structure, interacts with nop5. Component of box C/D small ribonucleoprotein (sRNP) particles that contain rpl7ae, FlpA and nop5, plus a guide RNA.

Its function is as follows. Involved in pre-rRNA and tRNA processing. Utilizes the methyl donor S-adenosyl-L-methionine to catalyze the site-specific 2'-hydroxyl methylation of ribose moieties in rRNA and tRNA. Site specificity is provided by a guide RNA that base pairs with the substrate. Methylation occurs at a characteristic distance from the sequence involved in base pairing with the guide RNA. The polypeptide is Fibrillarin-like rRNA/tRNA 2'-O-methyltransferase (Methanosarcina mazei (strain ATCC BAA-159 / DSM 3647 / Goe1 / Go1 / JCM 11833 / OCM 88) (Methanosarcina frisia)).